The sequence spans 641 residues: Leucine-rich repeat receptor-like serine/threonine/tyrosine-protein kinase SOBIR1 (641 aa).

Positions 1 to 31 (MAVPTGSANLFLRPLILAVLSFLLLSSFVSS) are cleaved as a signal peptide. Topologically, residues 32 to 284 (VEWLDIDSSD…KKKKSKKKKV (253 aa)) are extracellular. LRR repeat units follow at residues 112–133 (ELKELTLSNNQLVNAVPVDILS), 136–159 (QLEVLDLRKNRFSGQIPGNFSSLS), 160–182 (RLRILDLSSNKLSGNLNFLKNLR), 183–205 (NLENLSVANNLFSGKIPEQIVSF), and 207–228 (NLRFFDFSGNRYLEGPAPVMSS). N-linked (GlcNAc...) asparagine glycosylation is present at Asn154. An N-linked (GlcNAc...) asparagine glycan is attached at Asn186. The segment at 243–278 (AETPTSSPTNKPNNSTTSKAPKGAPKPGKLKKKKKK) is disordered. Polar residues predominate over residues 245 to 259 (TPTSSPTNKPNNSTT). Asn256 carries N-linked (GlcNAc...) asparagine glycosylation. Residues 260 to 269 (SKAPKGAPKP) are compositionally biased toward low complexity. A helical transmembrane segment spans residues 285-305 (AAWILGFVVGAIGGTISGFVF). Residues 306–641 (SVLFKLIIQA…VRTMLSQIKH (336 aa)) are Cytoplasmic-facing. Positions 347–641 (LASLEIIGRG…VRTMLSQIKH (295 aa)) constitute a Protein kinase domain. ATP contacts are provided by residues 353-361 (IGRGGCGEV) and Lys377. The active-site Proton acceptor is the Asp489.

The protein belongs to the protein kinase superfamily. Ser/Thr protein kinase family. As to quaternary structure, interacts with CST. Interacts with RLP23. Component of a trimeric complex composed of RLP23, SOBIR1 and BAK1. BAK1 is recruited into a pre-formed RLP23-SOBIR1 complex in a ligand-dependent manner. Autophosphorylated on Ser, Thr and Tyr residues. In terms of tissue distribution, mostly present in leaves and flowers, with increasing expression in older flowers.

It is found in the cell membrane. The catalysed reaction is L-seryl-[protein] + ATP = O-phospho-L-seryl-[protein] + ADP + H(+). The enzyme catalyses L-threonyl-[protein] + ATP = O-phospho-L-threonyl-[protein] + ADP + H(+). It carries out the reaction L-tyrosyl-[protein] + ATP = O-phospho-L-tyrosyl-[protein] + ADP + H(+). Dual specificity kinase acting on both serine/threonine- and tyrosine-containing substrates. Acting as a counterplayer of BIR1, promotes the activation of plant defense and cell death. Component of the RLP23-SOBIR1-BAK1 complex that mediates NLP-triggered immunity. Functions as an inhibitor/regulator of abscission, probably by regulating membrane trafficking during abscission. In Arabidopsis thaliana (Mouse-ear cress), this protein is Leucine-rich repeat receptor-like serine/threonine/tyrosine-protein kinase SOBIR1 (SOBIR1).